Consider the following 80-residue polypeptide: Clavanin-E (80 aa).

An N-terminal signal peptide occupies residues 1-19 (MKTTILILLILGLGINAKS). Positions 20–29 (LEERKSEEEK) are excised as a propeptide. Phenylalanine amide is present on phenylalanine 52. Residues 54–80 (DDQQDNGKFYGYYAEDNGKHWYDTGDQ) constitute a propeptide that is removed on maturation.

The protein localises to the secreted. In terms of biological role, has antimicrobial activity. The polypeptide is Clavanin-E (Styela clava (Sea squirt)).